Consider the following 370-residue polypeptide: Muconate cycloisomerase 1 (370 aa).

The active site involves Lys166. Positions 195, 221, and 246 each coordinate Mn(2+).

The protein belongs to the mandelate racemase/muconate lactonizing enzyme family. Homooctamer. It depends on Mn(2+) as a cofactor.

The enzyme catalyses (S)-muconolactone = cis,cis-muconate + H(+). The protein operates within aromatic compound metabolism; beta-ketoadipate pathway; 5-oxo-4,5-dihydro-2-furylacetate from catechol: step 2/3. In terms of biological role, catalyzes a syn cycloisomerization. The sequence is that of Muconate cycloisomerase 1 (catB) from Acinetobacter baylyi (strain ATCC 33305 / BD413 / ADP1).